The chain runs to 278 residues: Large ribosomal subunit protein uL2 (278 aa).

Disordered stretches follow at residues 1–20 (MGIR…SVSD) and 225–278 (VMNP…GKKR). Basic residues predominate over residues 258-278 (RNKKKASSRLIVRRRKSGKKR).

This sequence belongs to the universal ribosomal protein uL2 family. Part of the 50S ribosomal subunit. Forms a bridge to the 30S subunit in the 70S ribosome.

One of the primary rRNA binding proteins. Required for association of the 30S and 50S subunits to form the 70S ribosome, for tRNA binding and peptide bond formation. It has been suggested to have peptidyltransferase activity; this is somewhat controversial. Makes several contacts with the 16S rRNA in the 70S ribosome. The polypeptide is Large ribosomal subunit protein uL2 (Cutibacterium acnes (strain DSM 16379 / KPA171202) (Propionibacterium acnes)).